The sequence spans 257 residues: Acetylglutamate kinase (257 aa).

Residues 43–44, Arg65, and Asn157 contribute to the substrate site; that span reads GG.

It belongs to the acetylglutamate kinase family. ArgB subfamily.

Its subcellular location is the cytoplasm. It carries out the reaction N-acetyl-L-glutamate + ATP = N-acetyl-L-glutamyl 5-phosphate + ADP. The protein operates within amino-acid biosynthesis; L-arginine biosynthesis; N(2)-acetyl-L-ornithine from L-glutamate: step 2/4. Functionally, catalyzes the ATP-dependent phosphorylation of N-acetyl-L-glutamate. In Pasteurella multocida (strain Pm70), this protein is Acetylglutamate kinase.